A 445-amino-acid chain; its full sequence is Argininosuccinate lyase (445 aa).

This sequence belongs to the lyase 1 family. Argininosuccinate lyase subfamily.

It localises to the cytoplasm. The enzyme catalyses 2-(N(omega)-L-arginino)succinate = fumarate + L-arginine. It participates in amino-acid biosynthesis; L-arginine biosynthesis; L-arginine from L-ornithine and carbamoyl phosphate: step 3/3. The chain is Argininosuccinate lyase from Xylella fastidiosa (strain Temecula1 / ATCC 700964).